The sequence spans 320 residues: Mitochondrial thiamine pyrophosphate carrier 1 (320 aa).

Solcar repeat units lie at residues 12–110 (GTRR…TTQA), 119–205 (PQPV…LRPS), and 213–308 (PFGS…TLRA). The next 6 helical transmembrane spans lie at 17 to 35 (VVLA…VAPL), 91 to 107 (LMYV…YRTT), 125 to 145 (FVAG…LDLL), 180 to 197 (GCSA…LFFA), 219 to 239 (ALAG…LDLV), and 283 to 300 (GLTV…VTMW).

This sequence belongs to the mitochondrial carrier (TC 2.A.29) family.

It localises to the mitochondrion inner membrane. Mitochondrial transporter that mediates uptake of thiamine pyrophosphate (ThPP) into mitochondria. The chain is Mitochondrial thiamine pyrophosphate carrier 1 (tpc1) from Aspergillus terreus (strain NIH 2624 / FGSC A1156).